We begin with the raw amino-acid sequence, 823 residues long: Apoptosis-resistant E3 ubiquitin protein ligase 1 (823 aa).

The Filamin repeat unit spans residues 52-158 (GNYLDPRSCK…VAYSPYYKIF (107 aa)). The segment at 315–345 (PPMHMTSSQRRPSTAVDEEDEDSPSECHTPE) is disordered. Residues 483–789 (SISDWSKNFE…THSTLPTAHT (307 aa)) are interaction with SOCS2. Positions 483-823 (SISDWSKNFE…SEGCEGFGML (341 aa)) constitute an HECT domain. Residue cysteine 790 is the Glycyl thioester intermediate of the active site.

Interacts with SOCS2. Interacts (via HECT domain) with HTRA2, DIABLO/SMAC and SEPTIN4; in the cytoplasm following induction of apoptosis. Post-translationally, autoubiquitinated in vitro in the presence of E2 enzyme UBE2D1/UBCH5A.

The enzyme catalyses S-ubiquitinyl-[E2 ubiquitin-conjugating enzyme]-L-cysteine + [acceptor protein]-L-lysine = [E2 ubiquitin-conjugating enzyme]-L-cysteine + N(6)-ubiquitinyl-[acceptor protein]-L-lysine.. The protein operates within protein modification; protein ubiquitination. Functionally, E3 ubiquitin-protein ligase that catalyzes 'Lys-11'- or 'Lys-33'-linked polyubiquitin chains, with some preference for 'Lys-33' linkages. E3 ubiquitin-protein ligases accept ubiquitin from an E2 ubiquitin-conjugating enzyme in the form of a thioester and then directly transfers the ubiquitin to targeted substrates. Ubiquitinates SEPTIN4, DIABLO/SMAC and HTRA2 in vitro. Modulates pulmonary inflammation by targeting SOCS2 for ubiquitination and subsequent degradation by the proteasome. The sequence is that of Apoptosis-resistant E3 ubiquitin protein ligase 1 from Homo sapiens (Human).